The following is a 344-amino-acid chain: Secreted LysM effector LysM2 (344 aa).

A signal peptide spans 1-24 (MMAPKSLQTGLLILLLAKLKLAWG). One can recognise a LysM 1 domain in the interval 36-80 (YEAAASSGDTCTSFAAEWGLTEETFASLNPSAACPSLVAGQNYCM). Residues 88-134 (STTSSSSSTTSSSTTSSSTTSSSTTSSSTTTSSFTTTTASETTSTAA) are compositionally biased toward low complexity. The disordered stretch occupies residues 88–141 (STTSSSSSTTSSSTTSSSTTSSSTTSSSTTTSSFTTTTASETTSTAANGVTTPM). LysM domains lie at 153–199 (KFDL…YVCV), 216–262 (KFDL…YVCV), and 296–342 (KFWL…YICV).

It belongs to the secreted LysM effector family.

In terms of biological role, might have a role in sequestration of chitin oligosaccharides (breakdown products of fungal cell walls that are released during invasion and act as triggers of host immunity) to dampen host defense. In Penicillium expansum (Blue mold rot fungus), this protein is Secreted LysM effector LysM2.